The primary structure comprises 353 residues: Interferon-stimulated 20 kDa exonuclease-like 2 (353 aa).

Disordered regions lie at residues 1-93 and 125-172; these read MSTL…QPLD and ALPK…SGAS. Residues 14–23 are compositionally biased toward basic and acidic residues; the sequence is PPKKALEGNA. Over residues 24–35 the composition is skewed to basic residues; sequence KHRNFVKKRRLL. The span at 54 to 63 shows a compositional bias: basic and acidic residues; sequence LHSEPSKKGE. Positions 135 to 151 are enriched in basic residues; that stretch reads RSQKKSSQKKSSKKNHP. Polar residues predominate over residues 152–172; that stretch reads QKNAPQNSTQAHSENKCSGAS. The 176-residue stretch at 178 to 353 folds into the Exonuclease domain; the sequence is KMVAIDCEMV…EHLARNPPTD (176 aa).

Its subcellular location is the nucleus. The protein resides in the nucleolus. In terms of biological role, 3'-&gt; 5'-exoribonuclease involved in ribosome biogenesis in the processing of the 12S pre-rRNA. Displays a strong specificity for a 3'-end containing a free hydroxyl group. The polypeptide is Interferon-stimulated 20 kDa exonuclease-like 2 (ISG20L2) (Homo sapiens (Human)).